The primary structure comprises 145 residues: Large ribosomal subunit protein bL9 (145 aa).

It belongs to the bacterial ribosomal protein bL9 family.

Binds to the 23S rRNA. In Mesomycoplasma hyopneumoniae (strain 232) (Mycoplasma hyopneumoniae), this protein is Large ribosomal subunit protein bL9.